The sequence spans 142 residues: MVLSAADKTNVKGVFSKIGGHAEEYGAETLERMFTAYPQTKTYFPHFDLQHGSAQIKAHGKKVAAALVEAVNHIDDIAGALSKLSDLHAQKLRVDPVNFKFLGHCFLVVVAIHHPSALTPEVHASLDKFLCAVGTVLTAKYR.

One can recognise a Globin domain in the interval 2–142 (VLSAADKTNV…VGTVLTAKYR (141 aa)). O2 is bound at residue histidine 59. Histidine 88 is a heme b binding site.

The protein belongs to the globin family. In terms of assembly, heterotetramer of two alpha chains and two beta chains. As to expression, red blood cells.

Its function is as follows. Involved in oxygen transport from the lung to the various peripheral tissues. This chain is Hemoglobin subunit alpha-A (HBAA), found in Anser anser anser (Western greylag goose).